We begin with the raw amino-acid sequence, 383 residues long: 1-deoxy-D-xylulose 5-phosphate reductoisomerase (383 aa).

8 residues coordinate NADPH: Thr-10, Gly-11, Ser-12, Ile-13, Gly-36, Lys-37, Asn-38, and Asn-122. Lys-123 serves as a coordination point for 1-deoxy-D-xylulose 5-phosphate. Glu-124 is an NADPH binding site. A Mn(2+)-binding site is contributed by Asp-148. 4 residues coordinate 1-deoxy-D-xylulose 5-phosphate: Ser-149, Glu-150, Ser-174, and His-197. Position 150 (Glu-150) interacts with Mn(2+). Gly-203 is a binding site for NADPH. 4 residues coordinate 1-deoxy-D-xylulose 5-phosphate: Ser-210, Asn-215, Lys-216, and Glu-219. Mn(2+) is bound at residue Glu-219.

This sequence belongs to the DXR family. It depends on Mg(2+) as a cofactor. Requires Mn(2+) as cofactor.

The catalysed reaction is 2-C-methyl-D-erythritol 4-phosphate + NADP(+) = 1-deoxy-D-xylulose 5-phosphate + NADPH + H(+). Its pathway is isoprenoid biosynthesis; isopentenyl diphosphate biosynthesis via DXP pathway; isopentenyl diphosphate from 1-deoxy-D-xylulose 5-phosphate: step 1/6. Functionally, catalyzes the NADPH-dependent rearrangement and reduction of 1-deoxy-D-xylulose-5-phosphate (DXP) to 2-C-methyl-D-erythritol 4-phosphate (MEP). The protein is 1-deoxy-D-xylulose 5-phosphate reductoisomerase of Bacillus licheniformis (strain ATCC 14580 / DSM 13 / JCM 2505 / CCUG 7422 / NBRC 12200 / NCIMB 9375 / NCTC 10341 / NRRL NRS-1264 / Gibson 46).